Here is a 166-residue protein sequence, read N- to C-terminus: Lithostathine-1-beta (166 aa).

The first 22 residues, 1 to 22, serve as a signal peptide directing secretion; it reads MAQTNSFFMLISSLMFLSLSQG. An O-linked (GalNAc...) threonine glycan is attached at Thr-27. One can recognise a C-type lectin domain in the interval 34-164; that stretch reads ISCPEGTNAY…EKKFSFVCKF (131 aa). 3 disulfide bridges follow: Cys-36/Cys-47, Cys-64/Cys-162, and Cys-137/Cys-154.

Post-translationally, all O-linked glycans consist of Gal-GlcNAc-Gal-GalNAc tetrasaccharide core and get elongated (microheterogeneity).

The protein localises to the secreted. Might act as an inhibitor of spontaneous calcium carbonate precipitation. May be associated with neuronal sprouting in brain, and with brain and pancreas regeneration. This chain is Lithostathine-1-beta (REG1B), found in Homo sapiens (Human).